Consider the following 66-residue polypeptide: Large ribosomal subunit protein bL35 (66 aa).

The tract at residues 20 to 40 (GKIKSTQSAKRHGMTKRSKRS) is disordered. Residues 28 to 40 (AKRHGMTKRSKRS) show a composition bias toward basic residues.

It belongs to the bacterial ribosomal protein bL35 family.

The protein is Large ribosomal subunit protein bL35 of Ehrlichia chaffeensis (strain ATCC CRL-10679 / Arkansas).